The primary structure comprises 284 residues: Elongation factor Ts (284 aa).

Residues 80-83 (TDFV) form an involved in Mg(2+) ion dislocation from EF-Tu region.

Belongs to the EF-Ts family.

It localises to the cytoplasm. Functionally, associates with the EF-Tu.GDP complex and induces the exchange of GDP to GTP. It remains bound to the aminoacyl-tRNA.EF-Tu.GTP complex up to the GTP hydrolysis stage on the ribosome. The sequence is that of Elongation factor Ts from Neisseria gonorrhoeae (strain ATCC 700825 / FA 1090).